The chain runs to 474 residues: Glutamate--tRNA ligase 1 (474 aa).

The 'HIGH' region motif lies at 11–21 (PSPTGFLHIGG). Positions 113 to 133 (TARAEGRAPRYDGRWRDRDPS) are enriched in basic and acidic residues. A disordered region spans residues 113–136 (TARAEGRAPRYDGRWRDRDPSEAP). The 'KMSKS' region signature appears at 240-244 (KLSKR). Lys243 provides a ligand contact to ATP.

Belongs to the class-I aminoacyl-tRNA synthetase family. Glutamate--tRNA ligase type 1 subfamily. As to quaternary structure, monomer.

It localises to the cytoplasm. The enzyme catalyses tRNA(Glu) + L-glutamate + ATP = L-glutamyl-tRNA(Glu) + AMP + diphosphate. In terms of biological role, catalyzes the attachment of glutamate to tRNA(Glu) in a two-step reaction: glutamate is first activated by ATP to form Glu-AMP and then transferred to the acceptor end of tRNA(Glu). The chain is Glutamate--tRNA ligase 1 from Methylorubrum extorquens (strain PA1) (Methylobacterium extorquens).